Consider the following 234-residue polypeptide: Endo-1,4-beta-xylanase 1 (234 aa).

Residues 1 to 21 (MVSFIFTRIILFAAAINGAVA) form the signal peptide. N-linked (GlcNAc...) asparagine glycosylation is found at asparagine 25 and asparagine 75. Positions 38-234 (SGTPSSTGYS…SSGFSSITVA (197 aa)) constitute a GH11 domain. The Nucleophile role is filled by glutamate 124. N-linked (GlcNAc...) asparagine glycosylation occurs at asparagine 167. Residue glutamate 221 is the Proton donor of the active site.

Belongs to the glycosyl hydrolase 11 (cellulase G) family.

The protein resides in the secreted. The catalysed reaction is Endohydrolysis of (1-&gt;4)-beta-D-xylosidic linkages in xylans.. The protein operates within glycan degradation; xylan degradation. In terms of biological role, endo-1,4-beta-xylanase involved in the hydrolysis of xylan, a major structural heterogeneous polysaccharide found in plant biomass representing the second most abundant polysaccharide in the biosphere, after cellulose. The chain is Endo-1,4-beta-xylanase 1 (Xyn1) from Leucoagaricus gongylophorus (Leaf-cutting ant fungus).